The primary structure comprises 498 residues: PE-PGRS family protein PE_PGRS33 (498 aa).

The tract at residues 1–30 (MSFVVTIPEALAAVATDLAGIGSTIGTANA) is essential for translocation to the cell surface. The region spanning 1-93 (MSFVVTIPEA…AGSYAAAEAA (93 aa)) is the PE domain. Residues 140 to 260 (GNGGAGGSGA…GLFFGVGGAG (121 aa)) are interacts with TLR2.

This sequence belongs to the mycobacterial PE family. PGRS subfamily. As to quaternary structure, interacts with human TLR2.

The protein localises to the secreted. It localises to the cell wall. The protein resides in the cell surface. It is found in the cell outer membrane. Its activity is regulated as follows. Binding of Ca(2+) to PE_PGRS33 induces conformational changes and increases affinity for TLR2. In terms of biological role, induces TNF-alpha release through human Toll-like receptor 2 (TLR2) signaling pathway, leading to macrophage apoptosis. The signaling pathway involves TLR2-dependent activation of the mitogen-activated protein kinase kinase kinase 5 (ASK1), which activates the p38 and JNK MAPKs, leading to enhanced expression of TNF-alpha and tumor necrosis factor receptor superfamily member 1A (TNFRI) genes. Signals are amplified through classical caspase 8-dependent mitochondrial release of cytochrome c, leading to the activation of caspases 9 and 3. Mediates Ca(2+)-dependent up-regulation of the anti-inflammatory cytokine IL-10. Mediates entry into macrophages in a TLR2-dependent mechanism and activates the TLR2-dependent pro-adhesive pathway. The sequence is that of PE-PGRS family protein PE_PGRS33 from Mycobacterium tuberculosis (strain ATCC 25618 / H37Rv).